The sequence spans 223 residues: Bone marrow proteoglycan (223 aa).

The signal sequence occupies residues methionine 1–alanine 16. Positions leucine 17–lysine 106 are cleaved as a propeptide — acidic. Residues serine 20 to glutamine 81 form a disordered region. The O-linked (GalNAc...) threonine; partial glycan is linked to threonine 23. O-linked (GalNAc...) serine glycosylation is present at serine 24. The O-linked (Xyl...) (chondroitin sulfate) serine glycan is linked to serine 66. Residues serine 124 to tyrosine 223 enclose the C-type lectin domain. 2 disulfide bridges follow: cysteine 126–cysteine 221 and cysteine 198–cysteine 213.

In terms of processing, nitrated.

It localises to the secreted. Functionally, cytotoxin and helminthotoxin. MBP also induces non-cytolytic histamine release from basophils. It is involved in antiparasitic defense mechanisms and immune hypersensitivity reactions. The sequence is that of Bone marrow proteoglycan (Prg2) from Mus musculus (Mouse).